The following is a 1079-amino-acid chain: Psi-producing oxygenase A (1079 aa).

The tract at residues 105–446 (TNTFLTTLWN…DGSYDDNDLV (342 aa)) is linoleate 8R-lipoxygenase. His202 is a heme b binding site. Residue Tyr374 is part of the active site. His377 contributes to the heme b binding site. The 9,12-octadecadienoate 8-hydroperoxide 8R-isomerase stretch occupies residues 654-1079 (QFINSHSACM…WDGDLPEVKE (426 aa)).

This sequence belongs to the peroxidase family. In terms of assembly, homotetramer. It depends on heme b as a cofactor.

The enzyme catalyses (9Z,12Z)-octadecadienoate + O2 = (8R,9Z,12Z)-8-hydroperoxyoctadeca-9,12-dienoate. The catalysed reaction is (8R,9Z,12Z)-8-hydroperoxyoctadeca-9,12-dienoate = (5S,8R,9Z,12Z)-5,8-dihydroxyoctadeca-9,12-dienoate. Its function is as follows. Bifunctional heme-containing enzyme that oxidizes linoleic acid to (8R,9Z,12Z)-8-hydroperoxyoctadeca-9,12-dienoate (within the N-terminal heme peroxidase domain), which is subsequently isomerized to (5S,8R,9Z,12Z)-5,8-dihydroxyoctadeca-9,12-dienoate (within the C-terminal P450 heme thiolate domain). Oxidized unsaturated fatty acids, so-called oxylipins, derived from endogenous fatty acids, influence the development of the asexual conidiophores and sexual cleistothecia and regulate the secondary metabolism. These substances were collectively named psi factors and are primarily a mixture of hydroxylated oleic, linoleic and alpha-linolenic acids. They are termed psi-beta, psi-alpha, and psi-gamma, respectively. Oxylipins may also serve as activators of mammalian immune responses contributing to enhanced resistance to opportunistic fungi and as factors that modulate fungal development contributing to resistance to host defenses. The polypeptide is Psi-producing oxygenase A (ppoA) (Aspergillus fumigatus (strain CBS 144.89 / FGSC A1163 / CEA10) (Neosartorya fumigata)).